Consider the following 453-residue polypeptide: Cytochrome P450 monooxygenase PC-20 (453 aa).

2 helical membrane-spanning segments follow: residues Leu5–Ile25 and Leu49–Val69. Position 387 (Cys387) interacts with heme.

The protein belongs to the cytochrome P450 family. Heme is required as a cofactor.

It is found in the membrane. Its pathway is secondary metabolite biosynthesis. Cytochrome P450 monooxygenase; part of the gene cluster that mediates the biosynthesis of the indole diterpenes penitrems. The geranylgeranyl diphosphate (GGPP) synthase penG catalyzes the first step in penitrem biosynthesis via conversion of farnesyl pyrophosphate and isopentyl pyrophosphate into geranylgeranyl pyrophosphate (GGPP). Condensation of indole-3-glycerol phosphate with GGPP by the prenyl transferase penC then forms 3-geranylgeranylindole (3-GGI). Epoxidation by the FAD-dependent monooxygenase penM leads to a epoxidized-GGI that is substrate of the terpene cyclase penB for cyclization to yield paspaline. Paspaline is subsequently converted to 13-desoxypaxilline by the cytochrome P450 monooxygenase penP, the latter being then converted to paxilline by the cytochrome P450 monooxygenase penQ. Paxilline is converted to beta-paxitriol via C-10 ketoreduction by the short-chain dehydrogenase PC-15 which can be monoprenylated at the C-20 by the indole diterpene prenyltransferase penD. A two-step elimination (acetylation and elimination) process performed by the O-acetyltransferase PC-16 and the P.simplicissimum ptmI-ortholog not yet identified in P.crustosum, leads to the production of the prenylated form of penijanthine. The FAD-linked oxidoreductase ptmO then converts the prenylated form of penijanthine into PC-M5 which is in turn transformed into PC-M4 by the aromatic dimethylallyltransferase PC-22. A series of oxidation steps involving 4 cytochrome P450 monooxygenases (PC-21, PC-05, PC-23, PC-20) and a FAD-dependent monooxygenase (PC-14) are required for the transformation of PC-M4 to penitrems A and E. Synthesis of these final products is proposed to proceed via penitrems D and C (PC-21, PC-05, PC-14) and penitrems B and F (PC-21, PC-05, PC-14, PC-23). The polypeptide is Cytochrome P450 monooxygenase PC-20 (Penicillium crustosum (Blue mold fungus)).